The sequence spans 146 residues: Hemoglobin subunit beta (146 aa).

Residue Val-1 is modified to N-acetylvaline; partial. The 145-residue stretch at His-2–His-146 folds into the Globin domain. Thr-12 carries the phosphothreonine modification. An N6-acetyllysine modification is found at Lys-59. A heme b-binding site is contributed by His-63. Lys-82 is modified (N6-acetyllysine). Residue His-92 coordinates heme b. At Cys-93 the chain carries S-nitrosocysteine. Lys-144 bears the N6-acetyllysine mark.

It belongs to the globin family. As to quaternary structure, heterotetramer of two alpha chains and two beta chains. As to expression, red blood cells.

Functionally, involved in oxygen transport from the lung to the various peripheral tissues. This is Hemoglobin subunit beta (HBB) from Procavia capensis habessinica (Abyssinian hyrax).